The sequence spans 571 residues: Gag-Pro polyprotein (571 aa).

Residue glycine 2 is the site of N-myristoyl glycine; by host attachment. Positions 100–103 (PPPY) match the PPXY motif motif. 2 consecutive repeats follow at residues 342 to 362 (PPGP…CPTK) and 367 to 387 (PPGP…CPTL). 2 CCHC-type zinc fingers span residues 345 to 362 (PCYR…CPTK) and 370 to 387 (PCPI…CPTL). Threonine 453 serves as the catalytic Protease; shared with dimeric partner.

In terms of assembly, homodimer; the homodimers are part of the immature particles. Interacts with human TSG101 and NEDD4; these interactions are essential for budding and release of viral particles. Homodimer; further assembles as homohexamers. Post-translationally, specific enzymatic cleavages by the viral protease yield mature proteins. The polyprotein is cleaved during and after budding, this process is termed maturation. The protease is autoproteolytically processed at its N- and C-termini. Myristoylated. Myristoylation of the matrix (MA) domain mediates the transport and binding of Gag polyproteins to the host plasma membrane and is required for the assembly of viral particles.

Its subcellular location is the virion. Functionally, the matrix domain targets Gag, Gag-Pro and Gag-Pro-Pol polyproteins to the plasma membrane via a multipartite membrane binding signal, that includes its myristoylated N-terminus. Its function is as follows. Matrix protein. In terms of biological role, forms the spherical core of the virus that encapsulates the genomic RNA-nucleocapsid complex. Binds strongly to viral nucleic acids and promote their aggregation. Also destabilizes the nucleic acids duplexes via highly structured zinc-binding motifs. Functionally, the aspartyl protease mediates proteolytic cleavages of Gag and Gag-Pol polyproteins during or shortly after the release of the virion from the plasma membrane. Cleavages take place as an ordered, step-wise cascade to yield mature proteins. This process is called maturation. Displays maximal activity during the budding process just prior to particle release from the cell. This Bovine leukemia virus (isolate Japanese BLV-1) (BLV) protein is Gag-Pro polyprotein.